A 615-amino-acid chain; its full sequence is Chaperone protein DnaK (615 aa).

Residue T177 is modified to Phosphothreonine; by autocatalysis. The tract at residues 567–615 (TKESQGIAMKAYQKAQEKQAQEKGTQENTTAKNEKPQDEVVDADFEEKK) is disordered. A compositionally biased stretch (basic and acidic residues) spans 581 to 591 (AQEKQAQEKGT). Over residues 605–615 (EVVDADFEEKK) the composition is skewed to acidic residues.

This sequence belongs to the heat shock protein 70 family.

In terms of biological role, acts as a chaperone. This chain is Chaperone protein DnaK, found in Onion yellows phytoplasma (strain OY-M).